The chain runs to 461 residues: MGLPIVPGLLLSLVLLALLMGIHPSGVTGLVPSLGDREKRDNLCPQGKYAHPKNNSICCTKCHKGTYLVSDCPSPGQETVCEVCDKGTFTASQNHVRQCLSCKTCRKEMFQVEISPCKADMDTVCGCKKNQFQRYLSETHFQCVDCSPCFNGTVTIPCKEKQNTVCNCHAGFFLSGNECTPCSHCKKNQECMKLCLPPVANVTNPQDSGTAVLLPLVIFLGLCLLFFICISLLCRYPQWRPRVYSIICRDSAPVKEVEGEGIVTKPLTPASIPAFSPNPGFNPTLGFSTTPRFSHPVSSTPISPVFGPSNWHNFVPPVREVVPTQGADPLLYGSLNPVPIPAPVRKWEDVVAAQPQRLDTADPAMLYAVVDGVPPTRWKEFMRLLGLSEHEIERLELQNGRCLREAHYSMLEAWRRRTPRHEATLDVVGRVLCDMNLRGCLENIRETLESPAHSSTTHLPR.

The first 29 residues, 1–29, serve as a signal peptide directing secretion; it reads MGLPIVPGLLLSLVLLALLMGIHPSGVTG. The Extracellular segment spans residues 30 to 211; that stretch reads LVPSLGDREK…VTNPQDSGTA (182 aa). 4 TNFR-Cys repeats span residues 43-82, 83-125, 126-166, and 167-196; these read LCPQ…TVCE, VCDK…DTVC, GCKK…NTVC, and NCHA…KLCL. Disulfide bonds link cysteine 44–cysteine 58, cysteine 59–cysteine 72, cysteine 62–cysteine 81, cysteine 84–cysteine 99, cysteine 102–cysteine 117, cysteine 105–cysteine 125, cysteine 127–cysteine 143, cysteine 146–cysteine 158, cysteine 149–cysteine 166, cysteine 168–cysteine 179, cysteine 182–cysteine 195, and cysteine 185–cysteine 191. Residue asparagine 54 is glycosylated (N-linked (GlcNAc...) asparagine). Asparagine 151 is a glycosylation site (N-linked (GlcNAc...) asparagine). Asparagine 201 carries N-linked (GlcNAc...) asparagine glycosylation. Residues 212-234 traverse the membrane as a helical segment; sequence VLLPLVIFLGLCLLFFICISLLC. Topologically, residues 235–461 are cytoplasmic; that stretch reads RYPQWRPRVY…AHSSTTHLPR (227 aa). Residues 344–354 form an N-SMase activation domain (NSD) region; it reads VRKWEDVVAAQ. The Death domain maps to 363–448; that stretch reads PAMLYAVVDG…GCLENIRETL (86 aa).

In terms of assembly, binding of TNF to the extracellular domain leads to homotrimerization. The aggregated death domains provide a novel molecular interface that interacts specifically with the death domain of TRADD. Various TRADD-interacting proteins such as TRAFS, RIPK1 and possibly FADD, are recruited to the complex by their association with TRADD. This complex activates at least two distinct signaling cascades, apoptosis and NF-kappa-B signaling. Interacts with BAG4, BABAM2, FEM1B, GRB2, SQSTM1 and TRPC4AP. Interacts with DAB2IP. Interacts directly with NOL3 (via CARD domain); inhibits TNF-signaling pathway. Interacts with SH3RF2, TRADD and RIPK1. SH3RF2 facilitates the recruitment of RIPK1 and TRADD to TNFRSF1A in a TNF-alpha-dependent process. Interacts with PGLYRP1; this interaction is important for cell death induction. Interacts (via death domain) with MADD (via death domain).

The protein resides in the cell membrane. It is found in the golgi apparatus membrane. Its function is as follows. Receptor for TNFSF2/TNF-alpha and homotrimeric TNFSF1/lymphotoxin-alpha. The adapter molecule FADD recruits caspase-8 to the activated receptor. The resulting death-inducing signaling complex (DISC) performs caspase-8 proteolytic activation which initiates the subsequent cascade of caspases (aspartate-specific cysteine proteases) mediating apoptosis. This chain is Tumor necrosis factor receptor superfamily member 1A (Tnfrsf1a), found in Rattus norvegicus (Rat).